Here is a 109-residue protein sequence, read N- to C-terminus: Synaptobrevin-1 (109 aa).

Residues 1 to 26 (MDAQGDAGAQGGSQGGPRPSNKRLQQ) are disordered. The Cytoplasmic segment spans residues 1–86 (MDAQGDAGAQ…KRKYWWKNIK (86 aa)). In terms of domain architecture, v-SNARE coiled-coil homology spans 23 to 83 (RLQQTQAQVD…ATLKRKYWWK (61 aa)). The helical; Anchor for type IV membrane protein transmembrane segment at 87-107 (MMIIMCAIVVILIIIIVLWAG) threads the bilayer. The Extracellular portion of the chain corresponds to 108-109 (GK).

It belongs to the synaptobrevin family. Part of the SNARE core complex containing ric-4/SNAP25, snb-1/VAMP2 and unc-64/STX1A. This complex binds to cpx-1/CPLX1. As to expression, expressed in the nervous system notably the nerve ring, ventral cord and dorsal cord.

Its subcellular location is the cytoplasmic vesicle. The protein localises to the secretory vesicle. It is found in the synaptic vesicle membrane. The protein resides in the cell membrane. It localises to the synapse. Its subcellular location is the synaptosome. Its function is as follows. Involved in the targeting and/or fusion of transport vesicles to their target membrane. Acts in neuronal exocytosis of synaptic transmission. Likely to have a role in cholinergic transmisson. Required for viability, coordinated movement and M3 pharynx motor neuron function. The protein is Synaptobrevin-1 of Caenorhabditis elegans.